A 217-amino-acid chain; its full sequence is 3-demethoxyubiquinol 3-hydroxylase (217 aa).

Fe cation is bound by residues Glu-66, Glu-96, His-99, Glu-148, Glu-180, and His-183.

This sequence belongs to the COQ7 family. Requires Fe cation as cofactor.

The protein resides in the cell membrane. It catalyses the reaction a 5-methoxy-2-methyl-3-(all-trans-polyprenyl)benzene-1,4-diol + AH2 + O2 = a 3-demethylubiquinol + A + H2O. The protein operates within cofactor biosynthesis; ubiquinone biosynthesis. Functionally, catalyzes the hydroxylation of 2-nonaprenyl-3-methyl-6-methoxy-1,4-benzoquinol during ubiquinone biosynthesis. In Xanthomonas oryzae pv. oryzae (strain MAFF 311018), this protein is 3-demethoxyubiquinol 3-hydroxylase.